The following is a 469-amino-acid chain: Dihydroorotate dehydrogenase (quinone), mitochondrial (469 aa).

The N-terminal 37 residues, 1-37 (MSSSAAALAWRRSLRDALLRGSAWRGAPAANSAAARL), are a transit peptide targeting the mitochondrion. Residues 62–82 (LLTGAMIGLAIAGGAYVSTAD) traverse the membrane as a helical segment. FMN is bound by residues 150–154 (AGFDK) and serine 174. Residue lysine 154 coordinates substrate. A substrate-binding site is contributed by 199-203 (NRCGF). Positions 219-247 (HGKRKMEETSSSTSPTTSDVKQGGKAGPG) are disordered. Positions 227–236 (TSSSTSPTTS) are enriched in low complexity. Residues asparagine 252 and asparagine 283 each coordinate FMN. 283 to 288 (NVSSPN) is a binding site for substrate. The active-site Nucleophile is serine 286. Residues lysine 328 and serine 356 each coordinate FMN. Position 357–358 (357–358 (NT)) interacts with substrate. FMN contacts are provided by residues glycine 380, glycine 409, and 430–431 (YT).

Belongs to the dihydroorotate dehydrogenase family. Type 2 subfamily. FMN is required as a cofactor.

Its subcellular location is the mitochondrion inner membrane. The enzyme catalyses (S)-dihydroorotate + a quinone = orotate + a quinol. The protein operates within pyrimidine metabolism; UMP biosynthesis via de novo pathway; orotate from (S)-dihydroorotate (quinone route): step 1/1. Catalyzes the conversion of dihydroorotate to orotate with quinone as electron acceptor. This is Dihydroorotate dehydrogenase (quinone), mitochondrial (PYRD) from Oryza sativa subsp. japonica (Rice).